A 403-amino-acid polypeptide reads, in one-letter code: Argininosuccinate synthase (403 aa).

Residues 13–21 (AYSGGLDTS) and Ala-40 contribute to the ATP site. L-citrulline is bound by residues Tyr-91 and Ser-96. Residue Gly-121 coordinates ATP. Thr-123, Asn-127, and Asp-128 together coordinate L-aspartate. Asn-127 is a binding site for L-citrulline. The L-citrulline site is built by Arg-131, Ser-180, Ser-189, Glu-265, and Tyr-277.

This sequence belongs to the argininosuccinate synthase family. Type 1 subfamily. In terms of assembly, homotetramer.

It is found in the cytoplasm. The catalysed reaction is L-citrulline + L-aspartate + ATP = 2-(N(omega)-L-arginino)succinate + AMP + diphosphate + H(+). It functions in the pathway amino-acid biosynthesis; L-arginine biosynthesis; L-arginine from L-ornithine and carbamoyl phosphate: step 2/3. The sequence is that of Argininosuccinate synthase from Leptospira interrogans serogroup Icterohaemorrhagiae serovar Lai (strain 56601).